The following is a 766-amino-acid chain: Serine/threonine-protein kinase DCLK2 (766 aa).

The tract at residues 1–45 is disordered; that stretch reads MASTRSIELEHFEERDKRPRPGSRRGAPSSSGGSSSSGPKGNGLI. Positions 7-19 are enriched in basic and acidic residues; the sequence is IELEHFEERDKRP. A compositionally biased stretch (low complexity) spans 24–39; it reads RRGAPSSSGGSSSSGP. T61 bears the Phosphothreonine mark. 2 consecutive Doublecortin domains span residues 72 to 158 and 197 to 280; these read KKAR…VDYT and KLVT…AQDD. 2 stretches are compositionally biased toward low complexity: residues 300–312 and 324–347; these read AVKYSGSKSPGPS and TPSSQLSTPKSTKSSSSSPTSPGS. A disordered region spans residues 300 to 378; it reads AVKYSGSKSP…ELDRCISPEG (79 aa). The residue at position 362 (S362) is a Phosphoserine. In terms of domain architecture, Protein kinase spans 394 to 651; that stretch reads YKIGKVIGDG…AGQILSHPWV (258 aa). ATP contacts are provided by residues 400–408 and K423; that span reads IGDGNFAVV. D515 acts as the Proton acceptor in catalysis. Phosphoserine is present on S647. T666 carries the phosphothreonine modification. Residues 707-766 are disordered; that stretch reads CQDSGRPGMEPISPVPPSVEEIPVPGEAVPAPTPPESPTPHPPPAAPGGERAGTWRRHRD. The segment covering 724–736 has biased composition (low complexity); sequence SVEEIPVPGEAVP. A compositionally biased stretch (pro residues) spans 737-752; the sequence is APTPPESPTPHPPPAA.

This sequence belongs to the protein kinase superfamily. CAMK Ser/Thr protein kinase family. CaMK subfamily. Binds to and stabilizes microtubules. Interacts with MAPK8IP1/JIP-1, MAPK8IP2/JIP-2, MAPK9/JNK2, PPP1R9B/NEURABIN-2 and actin. Autophosphorylated. As to expression, expressed in the brain, heart and eyes.

Its subcellular location is the cytoplasm. It is found in the cytoskeleton. The enzyme catalyses L-seryl-[protein] + ATP = O-phospho-L-seryl-[protein] + ADP + H(+). It carries out the reaction L-threonyl-[protein] + ATP = O-phospho-L-threonyl-[protein] + ADP + H(+). Its function is as follows. Protein kinase with a significantly reduced C(a2+)/CAM affinity and dependence compared to other members of the CaMK family. May play a role in the down-regulation of CRE-dependent gene activation probably by phosphorylation of the CREB coactivator CRTC2/TORC2 and the resulting retention of TORC2 in the cytoplasm. This Homo sapiens (Human) protein is Serine/threonine-protein kinase DCLK2 (DCLK2).